A 363-amino-acid chain; its full sequence is Insulin gene enhancer protein ISL-3 (363 aa).

2 consecutive LIM zinc-binding domains span residues 27-80 (CVGC…CKRD) and 89-143 (CAKC…RADH). The segment at residues 191–250 (TTRVRTVLNEKQLHTLRTCYNANPRPDALMREQLVEMTGLSPRVIRVWFQNKRCKDKKRS) is a DNA-binding region (homeobox). The tract at residues 328-363 (FSESGSLGNSSGSDVTSLSSHLPDTPNSMVPSPVET) is disordered. Residues 329–340 (SESGSLGNSSGS) show a composition bias toward low complexity. Residues 341 to 363 (DVTSLSSHLPDTPNSMVPSPVET) show a composition bias toward polar residues.

The protein resides in the nucleus. Binds to one of the cis-acting domain of the insulin gene enhancer. May be involved in subtype specialization of primary motoneurons. The polypeptide is Insulin gene enhancer protein ISL-3 (isl3) (Oncorhynchus tshawytscha (Chinook salmon)).